The sequence spans 385 residues: Putative ribosomal RNA large subunit methyltransferase MJ1653 (385 aa).

The 80-residue stretch at 2–81 (TTKLYVDFGG…LDENYIREKI (80 aa)) folds into the PUA domain.

The protein belongs to the methyltransferase superfamily. RlmI family.

It is found in the cytoplasm. This Methanocaldococcus jannaschii (strain ATCC 43067 / DSM 2661 / JAL-1 / JCM 10045 / NBRC 100440) (Methanococcus jannaschii) protein is Putative ribosomal RNA large subunit methyltransferase MJ1653.